We begin with the raw amino-acid sequence, 429 residues long: Serine hydroxymethyltransferase 1 (429 aa).

Residues Leu-125 and 129–131 (GHL) contribute to the (6S)-5,6,7,8-tetrahydrofolate site. Residue Lys-234 is modified to N6-(pyridoxal phosphate)lysine.

The protein belongs to the SHMT family. In terms of assembly, homodimer. Pyridoxal 5'-phosphate is required as a cofactor.

The protein resides in the cytoplasm. The catalysed reaction is (6R)-5,10-methylene-5,6,7,8-tetrahydrofolate + glycine + H2O = (6S)-5,6,7,8-tetrahydrofolate + L-serine. It functions in the pathway one-carbon metabolism; tetrahydrofolate interconversion. Its pathway is amino-acid biosynthesis; glycine biosynthesis; glycine from L-serine: step 1/1. Its function is as follows. Catalyzes the reversible interconversion of serine and glycine with tetrahydrofolate (THF) serving as the one-carbon carrier. This reaction serves as the major source of one-carbon groups required for the biosynthesis of purines, thymidylate, methionine, and other important biomolecules. Also exhibits THF-independent aldolase activity toward beta-hydroxyamino acids, producing glycine and aldehydes, via a retro-aldol mechanism. This Agrobacterium fabrum (strain C58 / ATCC 33970) (Agrobacterium tumefaciens (strain C58)) protein is Serine hydroxymethyltransferase 1.